The following is a 279-amino-acid chain: Phycobilisome 34.5 kDa linker polypeptide, phycoerythrocyanin-associated, rod (279 aa).

In terms of domain architecture, PBS-linker spans 2–178 (STSVAERLAI…LYRGRANSDN (177 aa)). The region spanning 226-278 (ARMFIVEAIAGTLNTNVAVRRSRQVYTVPYDRLSATYQEIHKRGGKIVKITPA) is the CpcD-like domain.

Belongs to the phycobilisome linker protein family.

The protein resides in the cellular thylakoid membrane. Rod linker protein, associated with phycoerythrocyanin. Linker polypeptides determine the state of aggregation and the location of the disk-shaped phycobiliprotein units within the phycobilisome and modulate their spectroscopic properties in order to mediate a directed and optimal energy transfer. The sequence is that of Phycobilisome 34.5 kDa linker polypeptide, phycoerythrocyanin-associated, rod (pecC) from Mastigocladus laminosus (Fischerella sp.).